The primary structure comprises 419 residues: Adenylosuccinate synthetase (419 aa).

Residues 11–17 and 39–41 contribute to the GTP site; these read GDEGKGK and GHT. Catalysis depends on Asp-12, which acts as the Proton acceptor. Mg(2+) is bound by residues Asp-12 and Gly-39. Residues 12–15, 37–40, Thr-129, Arg-143, Asn-218, Thr-233, and Arg-297 each bind IMP; these read DEGK and NAGH. The active-site Proton donor is the His-40. Substrate is bound at residue 293–299; sequence VTTGRKR. GTP is bound by residues Arg-299, 325–327, and 407–409; these read KLD and GTG.

The protein belongs to the adenylosuccinate synthetase family. In terms of assembly, homodimer. Mg(2+) is required as a cofactor.

It is found in the cytoplasm. The enzyme catalyses IMP + L-aspartate + GTP = N(6)-(1,2-dicarboxyethyl)-AMP + GDP + phosphate + 2 H(+). It participates in purine metabolism; AMP biosynthesis via de novo pathway; AMP from IMP: step 1/2. In terms of biological role, plays an important role in the de novo pathway and in the salvage pathway of purine nucleotide biosynthesis. Catalyzes the first committed step in the biosynthesis of AMP from IMP. The sequence is that of Adenylosuccinate synthetase from Coccidioides posadasii (strain C735) (Valley fever fungus).